A 343-amino-acid chain; its full sequence is 5-amino-6-(D-ribitylamino)uracil--L-tyrosine 4-hydroxyphenyl transferase (343 aa).

Positions Val-39–Glu-268 constitute a Radical SAM core domain. Positions 53, 57, and 60 each coordinate [4Fe-4S] cluster.

Belongs to the radical SAM superfamily. CofH family. As to quaternary structure, consists of two subunits, CofG and CofH. It depends on [4Fe-4S] cluster as a cofactor.

It catalyses the reaction 5-amino-6-(D-ribitylamino)uracil + L-tyrosine + S-adenosyl-L-methionine = 5-amino-5-(4-hydroxybenzyl)-6-(D-ribitylimino)-5,6-dihydrouracil + 2-iminoacetate + 5'-deoxyadenosine + L-methionine + H(+). The protein operates within cofactor biosynthesis; coenzyme F0 biosynthesis. Catalyzes the radical-mediated synthesis of 5-amino-5-(4-hydroxybenzyl)-6-(D-ribitylimino)-5,6-dihydrouracil from 5-amino-6-(D-ribitylamino)uracil and L-tyrosine. The chain is 5-amino-6-(D-ribitylamino)uracil--L-tyrosine 4-hydroxyphenyl transferase from Archaeoglobus fulgidus (strain ATCC 49558 / DSM 4304 / JCM 9628 / NBRC 100126 / VC-16).